The primary structure comprises 158 residues: MQGNLSAWLVKHALIHRSLGFDYQGIETLQIKPGDWHSIAVILYVYGYNYLRSQCAYDVAPGGLLASVYHLTRIEYGVDQPEEVCIKVFAPRRDPRIPSVFWVWKSVDFQERESYDMLGISYDNHPRLKRILMPESWIGWPLRKDYIAPNFYEIQDAH.

Belongs to the complex I 30 kDa subunit family. As to quaternary structure, NDH is composed of at least 16 different subunits, 5 of which are encoded in the nucleus.

It is found in the plastid. Its subcellular location is the chloroplast thylakoid membrane. The enzyme catalyses a plastoquinone + NADH + (n+1) H(+)(in) = a plastoquinol + NAD(+) + n H(+)(out). The catalysed reaction is a plastoquinone + NADPH + (n+1) H(+)(in) = a plastoquinol + NADP(+) + n H(+)(out). Functionally, NDH shuttles electrons from NAD(P)H:plastoquinone, via FMN and iron-sulfur (Fe-S) centers, to quinones in the photosynthetic chain and possibly in a chloroplast respiratory chain. The immediate electron acceptor for the enzyme in this species is believed to be plastoquinone. Couples the redox reaction to proton translocation, and thus conserves the redox energy in a proton gradient. This chain is NAD(P)H-quinone oxidoreductase subunit J, chloroplastic, found in Guizotia abyssinica (Niger).